A 664-amino-acid polypeptide reads, in one-letter code: UvrABC system protein B (664 aa).

A Helicase ATP-binding domain is found at 23-412; the sequence is EGLNRGMRFQ…VVEQIIRPTG (390 aa). 36-43 is a binding site for ATP; that stretch reads GVTGSGKT. The short motif at 89–112 is the Beta-hairpin element; the sequence is YYDYYQPEAYIPTKDLYIEKNADI. The 160-residue stretch at 429–588 folds into the Helicase C-terminal domain; it reads DLVNEIVKVK…ITPRSVIKPL (160 aa). The UVR domain maps to 622–657; sequence EEYMAVLEEEMYRAASELRYEDAAALRDELFRIREE.

The protein belongs to the UvrB family. As to quaternary structure, forms a heterotetramer with UvrA during the search for lesions. Interacts with UvrC in an incision complex.

Its subcellular location is the cytoplasm. Its function is as follows. The UvrABC repair system catalyzes the recognition and processing of DNA lesions. A damage recognition complex composed of 2 UvrA and 2 UvrB subunits scans DNA for abnormalities. Upon binding of the UvrA(2)B(2) complex to a putative damaged site, the DNA wraps around one UvrB monomer. DNA wrap is dependent on ATP binding by UvrB and probably causes local melting of the DNA helix, facilitating insertion of UvrB beta-hairpin between the DNA strands. Then UvrB probes one DNA strand for the presence of a lesion. If a lesion is found the UvrA subunits dissociate and the UvrB-DNA preincision complex is formed. This complex is subsequently bound by UvrC and the second UvrB is released. If no lesion is found, the DNA wraps around the other UvrB subunit that will check the other stand for damage. This chain is UvrABC system protein B, found in Thermotoga maritima (strain ATCC 43589 / DSM 3109 / JCM 10099 / NBRC 100826 / MSB8).